Reading from the N-terminus, the 155-residue chain is Endoribonuclease YbeY (155 aa).

Zn(2+) is bound by residues His-113, His-117, and His-123.

The protein belongs to the endoribonuclease YbeY family. Zn(2+) is required as a cofactor.

It localises to the cytoplasm. Functionally, single strand-specific metallo-endoribonuclease involved in late-stage 70S ribosome quality control and in maturation of the 3' terminus of the 16S rRNA. The chain is Endoribonuclease YbeY from Ureaplasma urealyticum serovar 10 (strain ATCC 33699 / Western).